The primary structure comprises 338 residues: MLTERQLLILQTIIDDFIGSAQPVGSRTLAKKDEITFSSATIRNEMADLEELGFIEKTHSSSGRVPSEKGYRFYVDHLLAPQNLPNDEIVQIKDLFAERIFEAEKIAQQSAQILSELTNYTAIVLGPKLSTNKLKNVQIVPLDRQTAVAIIVTDTGHVQSKTITVPESVDLSDLEKMVNILNEKLSGVPMSELHNKIFKEIVTVLRGYVHNYDSAIKILDGTFQVPLSEKIYFGGKANMLSQPEFHDIQKVRSLLTMIDNEAEFYDILRHKQVGIQVKIGRENSATAMEDCSLISATYSIGEEQLGTIAILGPTRMQYSRVISLLQLFTRQITDGLKK.

The protein belongs to the HrcA family.

Negative regulator of class I heat shock genes (grpE-dnaK-dnaJ and groELS operons). Prevents heat-shock induction of these operons. The chain is Heat-inducible transcription repressor HrcA from Bacillus cereus (strain AH187).